An 830-amino-acid chain; its full sequence is Probable glucan 1,3-beta-glucosidase D (830 aa).

Basic and acidic residues predominate over residues 1–34 (MPSQSRSRDRYRGRDTEYTRRRYPDEHDYSHDDH). Residues 1 to 279 (MPSQSRSRDR…PPMDARWPKG (279 aa)) are disordered. The Cytoplasmic portion of the chain corresponds to 1-301 (MPSQSRSRDR…GRPFWKQKKW (301 aa)). A compositionally biased stretch (acidic residues) spans 35–51 (DYDYDDDDDDNDDLEQD). 2 stretches are compositionally biased toward basic and acidic residues: residues 52–98 (VTER…ERRR) and 110–175 (QHRE…KHQS). Low complexity predominate over residues 181–194 (SASHLLSADALARL). Composition is skewed to basic and acidic residues over residues 198 to 215 (YEKE…AAKA), 228 to 243 (EQER…DRSR), and 253 to 264 (EEGRGPEMEFRR). Residues 302-322 (LIGIGVVILILVIVIPVAVVV) traverse the membrane as a helical; Signal-anchor for type II membrane protein segment. The Extracellular portion of the chain corresponds to 323 to 830 (SKKHNDKPNA…PDFGSLPEYY (508 aa)). The disordered stretch occupies residues 327–351 (NDKPNATTTQPDGTTPSNSNLDGLS). Residues 330-348 (PNATTTQPDGTTPSNSNLD) show a composition bias toward polar residues. N-linked (GlcNAc...) asparagine glycans are attached at residues asparagine 331, asparagine 376, asparagine 381, asparagine 393, asparagine 546, and asparagine 558. Glutamate 597 serves as the catalytic Proton donor. N-linked (GlcNAc...) asparagine glycosylation is found at asparagine 610, asparagine 636, asparagine 669, and asparagine 689. Glutamate 701 serves as the catalytic Nucleophile.

It belongs to the glycosyl hydrolase 5 (cellulase A) family.

The protein localises to the cell membrane. The enzyme catalyses Successive hydrolysis of beta-D-glucose units from the non-reducing ends of (1-&gt;3)-beta-D-glucans, releasing alpha-glucose.. Glucosidase involved in the degradation of cellulosic biomass. Active on lichenan. In Aspergillus clavatus (strain ATCC 1007 / CBS 513.65 / DSM 816 / NCTC 3887 / NRRL 1 / QM 1276 / 107), this protein is Probable glucan 1,3-beta-glucosidase D (exgD).